Here is a 133-residue protein sequence, read N- to C-terminus: Interferon alpha-inducible protein 27-like protein 2 (133 aa).

A run of 3 helical transmembrane segments spans residues 8–28 (AAIG…AVGF), 51–71 (GGGV…AAGL), and 73–93 (TSSN…LGGA). The tract at residues 93–133 (AKRASPSPPPGGPRPEGEQPGENVPQVEPPKSPLGPEKHEK) is disordered.

The protein belongs to the IFI6/IFI27 family.

The protein resides in the mitochondrion membrane. Functionally, plays a role in the apoptotic process and has a pro-apoptotic activity. This Bos taurus (Bovine) protein is Interferon alpha-inducible protein 27-like protein 2.